A 380-amino-acid chain; its full sequence is Lipid-A-disaccharide synthase (380 aa).

It belongs to the LpxB family.

It catalyses the reaction a lipid X + a UDP-2-N,3-O-bis[(3R)-3-hydroxyacyl]-alpha-D-glucosamine = a lipid A disaccharide + UDP + H(+). Its pathway is bacterial outer membrane biogenesis; LPS lipid A biosynthesis. In terms of biological role, condensation of UDP-2,3-diacylglucosamine and 2,3-diacylglucosamine-1-phosphate to form lipid A disaccharide, a precursor of lipid A, a phosphorylated glycolipid that anchors the lipopolysaccharide to the outer membrane of the cell. In Francisella tularensis subsp. novicida (strain U112), this protein is Lipid-A-disaccharide synthase.